The following is a 555-amino-acid chain: ATP-dependent RNA helicase MRH4, mitochondrial (555 aa).

A mitochondrion-targeting transit peptide spans 1–25; it reads MFKLLIPNKYNYVIRPLVRFKSIKS. A Q motif motif is present at residues 101-108; that stretch reads DIKPTPVQ. The Helicase ATP-binding domain occupies 144-361; the sequence is ANEIQKTKVF…SKLFPDQRSL (218 aa). 157–164 contributes to the ATP binding site; the sequence is AETGSGKT. The DEAD box signature appears at 309–312; sequence DEAD. One can recognise a Helicase C-terminal domain in the interval 395–555; it reads CLAQALYAIS…NAIIRGLRIG (161 aa).

The protein belongs to the DEAD box helicase family. MRH4 subfamily.

Its subcellular location is the mitochondrion. The catalysed reaction is ATP + H2O = ADP + phosphate + H(+). Its function is as follows. ATP-binding RNA helicase involved in mitochondrial RNA metabolism. Required for maintenance of mitochondrial DNA. In Candida albicans (strain SC5314 / ATCC MYA-2876) (Yeast), this protein is ATP-dependent RNA helicase MRH4, mitochondrial (MRH4).